The chain runs to 177 residues: Cytochrome c-type biogenesis protein CcmE (177 aa).

Over 1 to 8 (MNPRRKSR) the chain is Cytoplasmic. The chain crosses the membrane as a helical; Signal-anchor for type II membrane protein span at residues 9 to 29 (LKVVMAVLSGLAVAVGLTLYA). Residues 30-177 (LSQNIDLFYT…QISQPFGENK (148 aa)) lie on the Periplasmic side of the membrane. Residues His131 and Tyr135 each coordinate heme. A disordered region spans residues 134-177 (NYMPPELGDQMKKQHQPMGISEADLKGKSERDATQISQPFGENK). Over residues 156–166 (ADLKGKSERDA) the composition is skewed to basic and acidic residues. The segment covering 167–177 (TQISQPFGENK) has biased composition (polar residues).

This sequence belongs to the CcmE/CycJ family.

The protein resides in the cell inner membrane. Functionally, heme chaperone required for the biogenesis of c-type cytochromes. Transiently binds heme delivered by CcmC and transfers the heme to apo-cytochromes in a process facilitated by CcmF and CcmH. The chain is Cytochrome c-type biogenesis protein CcmE from Glaesserella parasuis serovar 5 (strain SH0165) (Haemophilus parasuis).